The following is a 338-amino-acid chain: Cytochrome c biogenesis protein CcsA (338 aa).

8 helical membrane passes run 15–35, 36–56, 71–91, 97–117, 142–162, 246–266, 273–293, and 307–327; these read FLVLFLTMLLYWGGAAFPNIP, GLTGLGTLGVAIANLCMATLL, LYESLFFLAWGVTTMHLVAEW, WVGVITAPVAMGITAFAALSL, VMMISYAALLVGSLLAIAFLI, IIGLGFPLLTIGIIAGAVWAN, WSWDPKETWALITWLVFAAYL, and AFLAAAGFFVVWVCYLGVNIL.

Belongs to the CcmF/CycK/Ccl1/NrfE/CcsA family. As to quaternary structure, may interact with ccs1.

It localises to the cellular thylakoid membrane. Required during biogenesis of c-type cytochromes (cytochrome c6 and cytochrome f) at the step of heme attachment. The chain is Cytochrome c biogenesis protein CcsA from Picosynechococcus sp. (strain ATCC 27264 / PCC 7002 / PR-6) (Agmenellum quadruplicatum).